The sequence spans 58 residues: Small ribosomal subunit protein eS30 (58 aa).

The disordered stretch occupies residues 1–58; it reads MGKVHGSLARAGKVKNQTPKVPKLDKKKRLTGRAKKRQLYNRRFSDNGGRKKGPNSKA. The span at 25–40 shows a compositional bias: basic residues; it reads DKKKRLTGRAKKRQLY.

The protein belongs to the eukaryotic ribosomal protein eS30 family. In terms of assembly, component of the small ribosomal subunit. Mature ribosomes consist of a small (40S) and a large (60S) subunit. The 40S subunit contains about 32 different proteins and 1 molecule of RNA (18S). The 60S subunit contains about 42 different proteins and 3 molecules of RNA (28S, 5.8S and 5S).

The protein resides in the cytoplasm. Functionally, component of the ribosome, a large ribonucleoprotein complex responsible for the synthesis of proteins in the cell. The small ribosomal subunit (SSU) binds messenger RNAs (mRNAs) and translates the encoded message by selecting cognate aminoacyl-transfer RNA (tRNA) molecules. The large subunit (LSU) contains the ribosomal catalytic site termed the peptidyl transferase center (PTC), which catalyzes the formation of peptide bonds, thereby polymerizing the amino acids delivered by tRNAs into a polypeptide chain. The nascent polypeptides leave the ribosome through a tunnel in the LSU and interact with protein factors that function in enzymatic processing, targeting, and the membrane insertion of nascent chains at the exit of the ribosomal tunnel. The protein is Small ribosomal subunit protein eS30 of Plasmodium falciparum (isolate 3D7).